A 341-amino-acid chain; its full sequence is Uroporphyrinogen decarboxylase (341 aa).

Substrate is bound by residues 23-27 (RQAGR), Asp73, Tyr148, Ser203, and His318.

It belongs to the uroporphyrinogen decarboxylase family. Homodimer.

It localises to the cytoplasm. It carries out the reaction uroporphyrinogen III + 4 H(+) = coproporphyrinogen III + 4 CO2. It participates in porphyrin-containing compound metabolism; protoporphyrin-IX biosynthesis; coproporphyrinogen-III from 5-aminolevulinate: step 4/4. Functionally, catalyzes the decarboxylation of four acetate groups of uroporphyrinogen-III to yield coproporphyrinogen-III. This chain is Uroporphyrinogen decarboxylase, found in Brucella ovis (strain ATCC 25840 / 63/290 / NCTC 10512).